We begin with the raw amino-acid sequence, 189 residues long: Peptidyl-tRNA hydrolase (189 aa).

Residue Tyr-14 coordinates tRNA. The active-site Proton acceptor is His-19. Residues Tyr-64, Asn-66, and Asn-112 each contribute to the tRNA site.

Belongs to the PTH family. Monomer.

It localises to the cytoplasm. It carries out the reaction an N-acyl-L-alpha-aminoacyl-tRNA + H2O = an N-acyl-L-amino acid + a tRNA + H(+). Its function is as follows. Hydrolyzes ribosome-free peptidyl-tRNAs (with 1 or more amino acids incorporated), which drop off the ribosome during protein synthesis, or as a result of ribosome stalling. Functionally, catalyzes the release of premature peptidyl moieties from peptidyl-tRNA molecules trapped in stalled 50S ribosomal subunits, and thus maintains levels of free tRNAs and 50S ribosomes. In Clostridium botulinum (strain Loch Maree / Type A3), this protein is Peptidyl-tRNA hydrolase.